A 249-amino-acid chain; its full sequence is Large ribosomal subunit protein uL4 (249 aa).

The protein belongs to the universal ribosomal protein uL4 family. In terms of assembly, part of the 50S ribosomal subunit.

One of the primary rRNA binding proteins, this protein initially binds near the 5'-end of the 23S rRNA. It is important during the early stages of 50S assembly. It makes multiple contacts with different domains of the 23S rRNA in the assembled 50S subunit and ribosome. In terms of biological role, forms part of the polypeptide exit tunnel. This chain is Large ribosomal subunit protein uL4, found in Methanospirillum hungatei JF-1 (strain ATCC 27890 / DSM 864 / NBRC 100397 / JF-1).